Reading from the N-terminus, the 782-residue chain is E3 ubiquitin-protein ligase SopA (782 aa).

Positions 137–171 (VSVSANNRPTVSEGRTPPVSPSLSLQATSSPSSPA) are disordered. Positions 157–171 (PSLSLQATSSPSSPA) are enriched in low complexity. Cys753 serves as the catalytic Glycyl thioester intermediate.

It belongs to the SopA E3 ligase family. Ubiquitinated in the presence of host E1 ubiquitin-activating enzyme, E2 ubiquitin-conjugating enzyme and ubiquitin.

It localises to the secreted. Its subcellular location is the host mitochondrion. The enzyme catalyses S-ubiquitinyl-[E2 ubiquitin-conjugating enzyme]-L-cysteine + [acceptor protein]-L-lysine = [E2 ubiquitin-conjugating enzyme]-L-cysteine + N(6)-ubiquitinyl-[acceptor protein]-L-lysine.. Effector proteins function to alter host cell physiology and promote bacterial survival in host tissues. This protein is an E3 ubiquitin ligase that interferes with host's ubiquitination pathway. Required for inducing polymorphonuclear leukocytes migration across the intestinal epithelium. The protein is E3 ubiquitin-protein ligase SopA (sopA) of Salmonella dublin.